The chain runs to 591 residues: NADH-quinone oxidoreductase subunit C/D (591 aa).

The tract at residues 1 to 182 (MVTVVENTDP…TPYFLNTAKQ (182 aa)) is NADH dehydrogenase I subunit C. The interval 206–591 (DFMFLNIGPN…IDIVMADCDR (386 aa)) is NADH dehydrogenase I subunit D.

This sequence in the N-terminal section; belongs to the complex I 30 kDa subunit family. The protein in the C-terminal section; belongs to the complex I 49 kDa subunit family. NDH-1 is composed of 13 different subunits. Subunits NuoB, CD, E, F, and G constitute the peripheral sector of the complex.

It localises to the cell inner membrane. The enzyme catalyses a quinone + NADH + 5 H(+)(in) = a quinol + NAD(+) + 4 H(+)(out). In terms of biological role, NDH-1 shuttles electrons from NADH, via FMN and iron-sulfur (Fe-S) centers, to quinones in the respiratory chain. The immediate electron acceptor for the enzyme in this species is believed to be ubiquinone. Couples the redox reaction to proton translocation (for every two electrons transferred, four hydrogen ions are translocated across the cytoplasmic membrane), and thus conserves the redox energy in a proton gradient. The protein is NADH-quinone oxidoreductase subunit C/D of Psychrobacter cryohalolentis (strain ATCC BAA-1226 / DSM 17306 / VKM B-2378 / K5).